The following is a 191-amino-acid chain: Fe/S biogenesis protein NfuA (191 aa).

2 residues coordinate [4Fe-4S] cluster: C149 and C152.

The protein belongs to the NfuA family. In terms of assembly, homodimer. [4Fe-4S] cluster serves as cofactor.

Functionally, involved in iron-sulfur cluster biogenesis. Binds a 4Fe-4S cluster, can transfer this cluster to apoproteins, and thereby intervenes in the maturation of Fe/S proteins. Could also act as a scaffold/chaperone for damaged Fe/S proteins. This Edwardsiella ictaluri (strain 93-146) protein is Fe/S biogenesis protein NfuA.